The primary structure comprises 266 residues: Methylsterol monooxygenase 2-2 (266 aa).

3 helical membrane-spanning segments follow: residues 24 to 44 (IGSFLLHESVFFLSGLPFIFL), 71 to 91 (RLLLYHFSVNLPLMLASYPVF), and 107 to 127 (EVSAQILFYFIIEDFVFYWGH). In terms of domain architecture, Fatty acid hydroxylase spans 113–247 (LFYFIIEDFV…FVYMDWIFGT (135 aa)). A Histidine box-1 motif is present at residues 127–131 (HRILH). Residues 140–144 (HSVHH) carry the Histidine box-2 motif. Residues 162-182 (ILFLGFATIVGPALTGPHLIT) traverse the membrane as a helical segment. Positions 219–225 (FHDYHHR) match the Histidine box-3 motif.

This sequence belongs to the sterol desaturase family. The cofactor is Fe cation. In terms of tissue distribution, expressed in shoots, roots, siliques and flowers, and, slightly, in developing seeds.

The protein resides in the endoplasmic reticulum membrane. The catalysed reaction is 4,4-dimethyl-5alpha-cholest-7-en-3beta-ol + 6 Fe(II)-[cytochrome b5] + 3 O2 + 5 H(+) = 4alpha-carboxy-4beta-methyl-5alpha-cholest-7-ene-3beta-ol + 6 Fe(III)-[cytochrome b5] + 4 H2O. It catalyses the reaction 24-methylidenelophenol + 6 Fe(II)-[cytochrome b5] + 3 O2 + 5 H(+) = 4alpha-carboxy-ergosta-7,24(24(1))-dien-3beta-ol + 6 Fe(III)-[cytochrome b5] + 4 H2O. Functionally, non-heme iron oxygenase involved in sterols biosynthesis by catalyzing the removal of the second methyl group at the C-4 position. 24-ethylidenelophenol and 24-ethyllophenol are the preferred substrates. Together with SMO2-1, required during embryogenesis, probably by maintaining sterols and auxin homeostasis. The sequence is that of Methylsterol monooxygenase 2-2 from Arabidopsis thaliana (Mouse-ear cress).